Here is a 353-residue protein sequence, read N- to C-terminus: MKVVEKDLDKGYIEVLPETLDDLWHLYHVVRKGDLVFALERRRVKDERAETIRRDKGERKPVYLGVRVEDVEFDKYANRLRIKGVIEHGPESGSHHTVNVTTGKRIKIVKDEWERKDLERIEEAEMSRPPVMLVAVDTGEGTIGIVRDYGLDVVARVRHNVPGKRGGDRRAEMRKFFHRLADEIERIAEEEGVEHIVVGGPGFVKSDFAEFLREERDIPAHVEDTGSAGEAGLIEMIRRGAVERAVEESRVAEEVKHLEEVFKRIGKGDDKVAYGVRECLKAAEFGAIDVLLVADEKFREAMVEGEEDVLNAVKYAERTGAEVLIVSTEHEWGERLRELGGIAALLRFSIPTG.

The protein belongs to the eukaryotic release factor 1 family. Pelota subfamily. As to quaternary structure, monomer. The cofactor is a divalent metal cation.

It is found in the cytoplasm. Its function is as follows. May function in recognizing stalled ribosomes, interact with stem-loop structures in stalled mRNA molecules, and effect endonucleolytic cleavage of the mRNA. May play a role in the release non-functional ribosomes and degradation of damaged mRNAs. Has endoribonuclease activity. The chain is Protein pelota homolog from Methanopyrus kandleri (strain AV19 / DSM 6324 / JCM 9639 / NBRC 100938).